The following is a 161-amino-acid chain: Phosphopantetheine adenylyltransferase (161 aa).

Ser11 contacts substrate. ATP-binding positions include Ser11–Phe12 and His19. Substrate-binding residues include Lys43, Leu75, and Arg89. ATP is bound by residues Gly90–Arg92, Glu100, and Tyr125–Ser131.

The protein belongs to the bacterial CoaD family. In terms of assembly, homohexamer. Requires Mg(2+) as cofactor.

It localises to the cytoplasm. It carries out the reaction (R)-4'-phosphopantetheine + ATP + H(+) = 3'-dephospho-CoA + diphosphate. It participates in cofactor biosynthesis; coenzyme A biosynthesis; CoA from (R)-pantothenate: step 4/5. In terms of biological role, reversibly transfers an adenylyl group from ATP to 4'-phosphopantetheine, yielding dephospho-CoA (dPCoA) and pyrophosphate. The sequence is that of Phosphopantetheine adenylyltransferase from Staphylococcus carnosus (strain TM300).